We begin with the raw amino-acid sequence, 119 residues long: Large ribosomal subunit protein bL20 (119 aa).

The protein belongs to the bacterial ribosomal protein bL20 family.

Binds directly to 23S ribosomal RNA and is necessary for the in vitro assembly process of the 50S ribosomal subunit. It is not involved in the protein synthesizing functions of that subunit. This Clostridium perfringens (strain ATCC 13124 / DSM 756 / JCM 1290 / NCIMB 6125 / NCTC 8237 / Type A) protein is Large ribosomal subunit protein bL20.